A 71-amino-acid polypeptide reads, in one-letter code: uncharacterized protein (71 aa).

Residues 12–34 (YLYNYFSSTTSWLVFIILSLDTI) traverse the membrane as a helical segment.

The protein localises to the membrane. This is an uncharacterized protein from Schizosaccharomyces pombe (strain 972 / ATCC 24843) (Fission yeast).